Consider the following 191-residue polypeptide: UPF0312 protein PA0423 (191 aa).

The signal sequence occupies residues 1–23; sequence MLKKTLAALALGSALFTAGQAMA.

Belongs to the UPF0312 family. Type 1 subfamily.

The protein localises to the periplasm. In Pseudomonas aeruginosa (strain ATCC 15692 / DSM 22644 / CIP 104116 / JCM 14847 / LMG 12228 / 1C / PRS 101 / PAO1), this protein is UPF0312 protein PA0423.